The chain runs to 150 residues: Arginine repressor (150 aa).

Belongs to the ArgR family.

The protein resides in the cytoplasm. The protein operates within amino-acid biosynthesis; L-arginine biosynthesis [regulation]. Functionally, regulates arginine biosynthesis genes. In Thermoanaerobacter sp. (strain X514), this protein is Arginine repressor.